We begin with the raw amino-acid sequence, 174 residues long: Co-chaperone protein HscB homolog (174 aa).

The 73-residue stretch at 2–74 folds into the J domain; that stretch reads NYFELFSLLP…IQRAEHLLTL (73 aa).

The protein belongs to the HscB family. In terms of assembly, interacts with HscA and stimulates its ATPase activity.

Its function is as follows. Co-chaperone involved in the maturation of iron-sulfur cluster-containing proteins. Seems to help targeting proteins to be folded toward HscA. The polypeptide is Co-chaperone protein HscB homolog (Shewanella halifaxensis (strain HAW-EB4)).